Here is a 186-residue protein sequence, read N- to C-terminus: MTNSSGRRRPDVTTVEIIGGPEALEIGLSDYDARWAETYLRHRRRILDALGADVDVEHIGSTSVPGLAAKPIVDIVVAVADITSEEDYLDALLAAGYELRVREPGHRLVRTPGRDVHVHVYERGAAAVHEYLLFRDHLRADADDRALYENVKRALFEQPWNDMNDYSDAKSDVILAIKSRAGAARR.

This sequence belongs to the UPF0157 (GrpB) family.

The sequence is that of UPF0157 protein SCO7215 from Streptomyces coelicolor (strain ATCC BAA-471 / A3(2) / M145).